Reading from the N-terminus, the 355-residue chain is Probable GTP 3',8-cyclase (355 aa).

Positions 5–233 (AYGRPLKDLR…GRLHNRRVYR (229 aa)) constitute a Radical SAM core domain. GTP is bound at residue arginine 14. [4Fe-4S] cluster contacts are provided by cysteine 21, cysteine 25, and cysteine 28. Lysine 69 is a binding site for GTP. An S-adenosyl-L-methionine-binding site is contributed by glycine 73. A GTP-binding site is contributed by threonine 97. Residue serine 121 coordinates S-adenosyl-L-methionine. Lysine 157 is a GTP binding site. Positions 252 and 255 each coordinate [4Fe-4S] cluster. 257–259 (RVR) serves as a coordination point for GTP. Cysteine 269 serves as a coordination point for [4Fe-4S] cluster.

It belongs to the radical SAM superfamily. MoaA family. [4Fe-4S] cluster serves as cofactor.

It catalyses the reaction GTP + AH2 + S-adenosyl-L-methionine = (8S)-3',8-cyclo-7,8-dihydroguanosine 5'-triphosphate + 5'-deoxyadenosine + L-methionine + A + H(+). It functions in the pathway cofactor biosynthesis; molybdopterin biosynthesis. Its function is as follows. Catalyzes the cyclization of GTP to (8S)-3',8-cyclo-7,8-dihydroguanosine 5'-triphosphate. The protein is Probable GTP 3',8-cyclase of Aeropyrum pernix (strain ATCC 700893 / DSM 11879 / JCM 9820 / NBRC 100138 / K1).